A 282-amino-acid chain; its full sequence is Probable endonuclease 4 (282 aa).

Zn(2+)-binding residues include H66, H106, E143, D177, H180, H214, D227, H229, and E259.

This sequence belongs to the AP endonuclease 2 family. The cofactor is Zn(2+).

The catalysed reaction is Endonucleolytic cleavage to 5'-phosphooligonucleotide end-products.. In terms of biological role, endonuclease IV plays a role in DNA repair. It cleaves phosphodiester bonds at apurinic or apyrimidinic (AP) sites, generating a 3'-hydroxyl group and a 5'-terminal sugar phosphate. This chain is Probable endonuclease 4, found in Nitratidesulfovibrio vulgaris (strain DP4) (Desulfovibrio vulgaris).